The primary structure comprises 182 residues: Large ribosomal subunit protein bL25 (182 aa).

This sequence belongs to the bacterial ribosomal protein bL25 family. CTC subfamily. Part of the 50S ribosomal subunit; part of the 5S rRNA/L5/L18/L25 subcomplex. Contacts the 5S rRNA. Binds to the 5S rRNA independently of L5 and L18.

Its function is as follows. This is one of the proteins that binds to the 5S RNA in the ribosome where it forms part of the central protuberance. In Borrelia duttonii (strain Ly), this protein is Large ribosomal subunit protein bL25.